The primary structure comprises 463 residues: L-seryl-tRNA(Sec) selenium transferase (463 aa).

K295 is modified (N6-(pyridoxal phosphate)lysine).

The protein belongs to the SelA family. As to quaternary structure, homodecamer; pentamer of dimers. Binds only one seryl-tRNA(Sec) per dimer. Pyridoxal 5'-phosphate serves as cofactor.

The protein resides in the cytoplasm. The enzyme catalyses L-seryl-tRNA(Sec) + selenophosphate + H(+) = L-selenocysteinyl-tRNA(Sec) + phosphate. Its pathway is aminoacyl-tRNA biosynthesis; selenocysteinyl-tRNA(Sec) biosynthesis; selenocysteinyl-tRNA(Sec) from L-seryl-tRNA(Sec) (bacterial route): step 1/1. Its function is as follows. Converts seryl-tRNA(Sec) to selenocysteinyl-tRNA(Sec) required for selenoprotein biosynthesis. This chain is L-seryl-tRNA(Sec) selenium transferase, found in Escherichia coli O127:H6 (strain E2348/69 / EPEC).